The chain runs to 185 residues: Threonylcarbamoyl-AMP synthase (185 aa).

The YrdC-like domain occupies Ser4 to Gly185.

It belongs to the SUA5 family. TsaC subfamily.

The protein resides in the cytoplasm. The enzyme catalyses L-threonine + hydrogencarbonate + ATP = L-threonylcarbamoyladenylate + diphosphate + H2O. In terms of biological role, required for the formation of a threonylcarbamoyl group on adenosine at position 37 (t(6)A37) in tRNAs that read codons beginning with adenine. Catalyzes the conversion of L-threonine, HCO(3)(-)/CO(2) and ATP to give threonylcarbamoyl-AMP (TC-AMP) as the acyladenylate intermediate, with the release of diphosphate. This chain is Threonylcarbamoyl-AMP synthase, found in Pseudomonas entomophila (strain L48).